The primary structure comprises 283 residues: MGYTLWNDQIVKDEEVKIDKEDRGYQFGDGVYEVVKVYNGEMFTVNEHIDRLYASAEKIRITIPYTKDKFHQLLHELVEKNELNTGHIYFQVTRGTSPRAHQFPENTVKPVIIGYTKENPRPLENLEKGVKATFVEDIRWLRCDIKSLNLLGAVLAKQEAHEKGCYEAILHRNNTVTEGSSSNVFGIKDGILYTHPANNMILKGITRDVVIACANEINMPVKEIPFTTHEALKMDELFVTSTTSEITPVIEIDGKLIRDGKVGEWTRKLQKQFETKIPKPLHI.

Y32 contributes to the substrate binding site. R51 is a pyridoxal 5'-phosphate binding site. Residues R99 and H101 each contribute to the substrate site. Residue K146 is the Proton acceptor of the active site. Position 146 is an N6-(pyridoxal phosphate)lysine (K146). E178 provides a ligand contact to pyridoxal 5'-phosphate.

Belongs to the class-IV pyridoxal-phosphate-dependent aminotransferase family. As to quaternary structure, homodimer. Requires pyridoxal 5'-phosphate as cofactor.

It catalyses the reaction D-alanine + 2-oxoglutarate = D-glutamate + pyruvate. Acts on the D-isomers of alanine, leucine, aspartate, glutamate, aminobutyrate, norvaline and asparagine. The enzyme transfers an amino group from a substrate D-amino acid to the pyridoxal phosphate cofactor to form pyridoxamine and an alpha-keto acid in the first half-reaction. The second-half reaction is the reverse of the first, transferring the amino group from the pyridoxamine to a second alpha-keto acid to form the product D-amino acid via a ping-pong mechanism. This is an important process in the formation of D-alanine and D-glutamate, which are essential bacterial cell wall components. In Bacillus sp. (strain YM-1), this protein is D-alanine aminotransferase (dat).